Here is a 556-residue protein sequence, read N- to C-terminus: MSSLPSRLAARIESAIGVDPQLRPATKPQFGHFQSNVALRLAKEEKRPPRDVAADIVAKLDIEDLCETPEIAGPGFINLRLRADVLARVASDFVTDPNAGIAQAEKPERVVIDYSAPNVAKQMHVGHLRSTIIGDCFNRVLSAQGHTVIPQNHIGDWGTQFGMLIEYIVEKRMDVEDFDLSGVEQLYQDSKKTFDADPQFADRARRRVVKLQGGDAETLRIWRTLIDISLEGFNATYSRLSVLLTDEDVAGESSYNDDLPRVVDELVADGLAVEDNGALCVFVEGQDAPMIVRKRDGGFGYDATDLAAIRRRVGKLKADRIIYVTDVRQSHHFEVLFQVARMAGFLPDDVEAEHVGYGMVLGPDGRPFKTREGGTVSLSDLLDEAETHAAPNIALAAIKYADLSNGLQKDYVFDAERMVQTTGDTGPYLQYAHARVSQILRKAAAEANPNVDPEADLDAMDWGRISVLDEPAEQQLALLLSRFGEIVEVVATDLTPHKLCTYLYELAGAYSVFYEQCPVLRSTGEVRGSRLALCAATRRVLGRGLDLLGIDAPDRM.

The 'HIGH' region motif lies at 117–127; the sequence is PNVAKQMHVGH.

It belongs to the class-I aminoacyl-tRNA synthetase family. As to quaternary structure, monomer.

The protein resides in the cytoplasm. The enzyme catalyses tRNA(Arg) + L-arginine + ATP = L-arginyl-tRNA(Arg) + AMP + diphosphate. The sequence is that of Arginine--tRNA ligase from Cutibacterium acnes (strain DSM 16379 / KPA171202) (Propionibacterium acnes).